The chain runs to 442 residues: MSKTYHFIGIKGSGMSALALMLHQMGHKVQGSDVEKYYFTQRGLEQAGITILPFSEDNITPDMELIVGNAFRENNKEVAYALRHQIPFKRYHDFLGDFMKSFISFAVAGAHGKTSTTGLLSHVLKNITDTSYLIGDGTGRGSANAQYFVFESDEYERHFMPYHPEYSIITNIDFDHPDYFTGIADVRNAFNDYAKQVKKALFVYGEDDELKKIEAPAPIYYYGFEKGNDFIAYDITRTTNGSDFKVKHQGEVIGQFHVPAYGKHNILNATAVIANLFVAGIDMALVADHLKTFSGVKRRFTEKIINDTIIIDDFAHHPTEIVATIDAARQKYPSKEIVAIFQPHTFTRTIALLEDFACALNEADSVYLAQIYGSAREVDKGEVKVEDLAAKIIKPSQVVTVENVSPLLDHDNAVYVFMGAGDIQLYEHSFEELLANLTKNNQ.

ATP is bound at residue 109-115; that stretch reads GAHGKTS.

The protein belongs to the MurCDEF family.

It is found in the cytoplasm. The catalysed reaction is UDP-N-acetyl-alpha-D-muramate + L-alanine + ATP = UDP-N-acetyl-alpha-D-muramoyl-L-alanine + ADP + phosphate + H(+). Its pathway is cell wall biogenesis; peptidoglycan biosynthesis. In terms of biological role, cell wall formation. The sequence is that of UDP-N-acetylmuramate--L-alanine ligase from Streptococcus pyogenes serotype M2 (strain MGAS10270).